Here is a 183-residue protein sequence, read N- to C-terminus: Bifunctional protein PyrR (183 aa).

Residues 102 to 114 (VVLVDDVLYTGRT) carry the PRPP-binding motif.

The protein belongs to the purine/pyrimidine phosphoribosyltransferase family. PyrR subfamily. In terms of assembly, homodimer and homohexamer; in equilibrium.

The enzyme catalyses UMP + diphosphate = 5-phospho-alpha-D-ribose 1-diphosphate + uracil. Regulates transcriptional attenuation of the pyrimidine nucleotide (pyr) operon by binding in a uridine-dependent manner to specific sites on pyr mRNA. This disrupts an antiterminator hairpin in the RNA and favors formation of a downstream transcription terminator, leading to a reduced expression of downstream genes. Functionally, also displays a weak uracil phosphoribosyltransferase activity which is not physiologically significant. In Listeria monocytogenes serotype 4a (strain HCC23), this protein is Bifunctional protein PyrR.